Here is a 293-residue protein sequence, read N- to C-terminus: uncharacterized protein (293 aa).

2 disordered regions span residues 1–95 (MFLR…KDKA) and 268–293 (EETA…GRAL). Phosphoserine is present on residues serine 34, serine 35, and serine 89. Composition is skewed to basic and acidic residues over residues 85–95 (KRMDSLKKDKA) and 277–286 (GQGKEAKEQT).

This is an uncharacterized protein from Rattus norvegicus (Rat).